A 446-amino-acid polypeptide reads, in one-letter code: Adenylosuccinate synthetase (446 aa).

Residues 20–26 and 48–50 each bind GTP; these read GDEGKGK and GHT. D21 (proton acceptor) is an active-site residue. D21 and G48 together coordinate Mg(2+). IMP is bound by residues 21–24, 46–49, T137, R151, Q232, T247, and R319; these read DEGK and NAGH. The active-site Proton donor is H49. 315-321 lines the substrate pocket; it reads SVTGRPR. GTP-binding positions include R321, 347–349, and 429–431; these read KLD and STG.

This sequence belongs to the adenylosuccinate synthetase family. As to quaternary structure, homodimer. Mg(2+) is required as a cofactor.

The protein localises to the cytoplasm. The enzyme catalyses IMP + L-aspartate + GTP = N(6)-(1,2-dicarboxyethyl)-AMP + GDP + phosphate + 2 H(+). The protein operates within purine metabolism; AMP biosynthesis via de novo pathway; AMP from IMP: step 1/2. In terms of biological role, plays an important role in the de novo pathway of purine nucleotide biosynthesis. Catalyzes the first committed step in the biosynthesis of AMP from IMP. This chain is Adenylosuccinate synthetase, found in Ralstonia pickettii (strain 12J).